A 173-amino-acid polypeptide reads, in one-letter code: Translation initiation factor IF-3 (173 aa).

This sequence belongs to the IF-3 family. In terms of assembly, monomer.

Its subcellular location is the cytoplasm. Its function is as follows. IF-3 binds to the 30S ribosomal subunit and shifts the equilibrium between 70S ribosomes and their 50S and 30S subunits in favor of the free subunits, thus enhancing the availability of 30S subunits on which protein synthesis initiation begins. This chain is Translation initiation factor IF-3, found in Methylorubrum populi (strain ATCC BAA-705 / NCIMB 13946 / BJ001) (Methylobacterium populi).